Consider the following 1059-residue polypeptide: Zinc finger protein 628 (1059 aa).

6 consecutive C2H2-type zinc fingers follow at residues 36-58 (YECGECGKSFRWSSRLLHHQRTH), 64-86 (YKCPDCPKAFKGSSALLYHQRGH), 92-114 (YQCPDCPKAFKRSSLLQIHRSVH), 120-142 (FICGQCGLAFKWSSHYQYHLRQH), 148-170 (YPCPDCPKAFKNSSSLRRHRHVH), and 176-198 (YTCGVCGKSFTQSTNLRQHQRVH). Thr199 is modified (phosphothreonine). Residues 204–226 (FRCPLCPKTFTHSSNLLLHQRTH) form a C2H2-type 7 zinc finger. Disordered regions lie at residues 226-247 (HGAAPAPGTASAAPPPQSREPG), 260-280 (LQPHSPPAPPAPPPPPPPVVP), and 312-351 (EHQPCPGPDAAPQPQEAPAEAPKADQPPSPLPQPPPPAAA). A compositionally biased stretch (low complexity) spans 228-237 (AAPAPGTASA). Positions 263–279 (HSPPAPPAPPPPPPPVV) are enriched in pro residues. Low complexity predominate over residues 323-335 (PQPQEAPAEAPKA). A compositionally biased stretch (pro residues) spans 336 to 351 (DQPPSPLPQPPPPAAA). 7 C2H2-type zinc fingers span residues 356-378 (FACLPCGKSFRTVAGLSRHQHSH), 386-408 (FRCGSCDGSFPQLASLLAHQQCH), 454-476 (YKCAECGKSFKGSSGLRYHLRDH), 482-504 (YQCGECGKAFKRSSLLAIHQRVH), 510-532 (FTCGQCGLTFKWSSHYQYHLRLH), 538-560 (YACGECGKAFRNTSCLRRHRHVH), and 566-588 (HACGVCGKSFAQTSNLRQHQRVH). A Phosphothreonine modification is found at Thr589. 2 C2H2-type zinc fingers span residues 594 to 616 (FRCPLCPKTFTHSSNLLLHQRTH) and 622 to 644 (FTCPICGRGFVMAAYLQRHLRTH). Over residues 644-658 (HAPANTPPSTTAPAA) the composition is skewed to low complexity. The disordered stretch occupies residues 644-674 (HAPANTPPSTTAPAAGPQPPAPLAAARAPPA). Repeat copies occupy residues 818–831 (VQLQPLRPAPEVTT), 832–842 (VQLQPAQEVTT), 843–853 (VQLQPAQEVTT), and 854–864 (VQLQPAQEVTT). The segment at 818-864 (VQLQPLRPAPEVTTVQLQPAQEVTTVQLQPAQEVTTVQLQPAQEVTT) is 4 X approximate tandem repeats. Residues 943 to 1059 (DGEQTRLCVQ…LPAVQLVHTF (117 aa)) are interaction with TAF4B.

As to quaternary structure, interacts with TAF4B.

The protein resides in the nucleus. Transcriptional activator. Binds DNA on GT-box consensus sequence 5'-TTGGTT-3'. Plays a role in spermiogenesis. This is Zinc finger protein 628 (ZNF628) from Homo sapiens (Human).